We begin with the raw amino-acid sequence, 354 residues long: Fructose-bisphosphate aldolase 2 (354 aa).

Residue Ser50 coordinates D-glyceraldehyde 3-phosphate. Asp83 serves as the catalytic Proton donor. The Zn(2+) site is built by His84, Asp105, Glu142, and His198. Gly199 lines the dihydroxyacetone phosphate pocket. A Zn(2+)-binding site is contributed by His232. Dihydroxyacetone phosphate-binding positions include 233–235 (GSS) and 275–278 (NIDT).

The protein belongs to the class II fructose-bisphosphate aldolase family. In terms of assembly, homodimer. Zn(2+) serves as cofactor.

It carries out the reaction beta-D-fructose 1,6-bisphosphate = D-glyceraldehyde 3-phosphate + dihydroxyacetone phosphate. Its pathway is carbohydrate biosynthesis; Calvin cycle. The protein operates within carbohydrate degradation; glycolysis; D-glyceraldehyde 3-phosphate and glycerone phosphate from D-glucose: step 4/4. Functionally, catalyzes the aldol condensation of dihydroxyacetone phosphate (DHAP or glycerone-phosphate) with glyceraldehyde 3-phosphate (G3P) to form fructose 1,6-bisphosphate (FBP) in gluconeogenesis and the reverse reaction in glycolysis. This Cereibacter sphaeroides (Rhodobacter sphaeroides) protein is Fructose-bisphosphate aldolase 2 (cfxB).